Consider the following 315-residue polypeptide: Type II restriction enzyme SalI (315 aa).

It catalyses the reaction Endonucleolytic cleavage of DNA to give specific double-stranded fragments with terminal 5'-phosphates.. A P subtype restriction enzyme that recognizes the double-stranded sequence 5'-GTCGAC-3' and cleaves after G-1. This chain is Type II restriction enzyme SalI, found in Streptomyces albus G.